Reading from the N-terminus, the 204-residue chain is uncharacterized protein (204 aa).

The protein localises to the cytoplasm. It is found in the nucleus. This is an uncharacterized protein from Schizosaccharomyces pombe (strain 972 / ATCC 24843) (Fission yeast).